Here is a 290-residue protein sequence, read N- to C-terminus: 4-hydroxy-tetrahydrodipicolinate synthase (290 aa).

Residue T44 coordinates pyruvate. The Proton donor/acceptor role is filled by Y132. Catalysis depends on K160, which acts as the Schiff-base intermediate with substrate. I202 is a binding site for pyruvate.

This sequence belongs to the DapA family. Homotetramer; dimer of dimers.

It localises to the cytoplasm. It carries out the reaction L-aspartate 4-semialdehyde + pyruvate = (2S,4S)-4-hydroxy-2,3,4,5-tetrahydrodipicolinate + H2O + H(+). It participates in amino-acid biosynthesis; L-lysine biosynthesis via DAP pathway; (S)-tetrahydrodipicolinate from L-aspartate: step 3/4. Its function is as follows. Catalyzes the condensation of (S)-aspartate-beta-semialdehyde [(S)-ASA] and pyruvate to 4-hydroxy-tetrahydrodipicolinate (HTPA). In Geobacter sulfurreducens (strain ATCC 51573 / DSM 12127 / PCA), this protein is 4-hydroxy-tetrahydrodipicolinate synthase.